A 147-amino-acid polypeptide reads, in one-letter code: Large ribosomal subunit protein bL9 (147 aa).

The protein belongs to the bacterial ribosomal protein bL9 family.

Its function is as follows. Binds to the 23S rRNA. This chain is Large ribosomal subunit protein bL9, found in Campylobacter jejuni subsp. doylei (strain ATCC BAA-1458 / RM4099 / 269.97).